A 202-amino-acid chain; its full sequence is Large ribosomal subunit protein bL25 (202 aa).

This sequence belongs to the bacterial ribosomal protein bL25 family. CTC subfamily. In terms of assembly, part of the 50S ribosomal subunit; part of the 5S rRNA/L5/L18/L25 subcomplex. Contacts the 5S rRNA. Binds to the 5S rRNA independently of L5 and L18.

Functionally, this is one of the proteins that binds to the 5S RNA in the ribosome where it forms part of the central protuberance. This is Large ribosomal subunit protein bL25 from Clostridium perfringens (strain ATCC 13124 / DSM 756 / JCM 1290 / NCIMB 6125 / NCTC 8237 / Type A).